The primary structure comprises 384 residues: Toluene efflux pump periplasmic linker protein TtgA (384 aa).

Positions 1–22 are cleaved as a signal peptide; sequence MQFKPAVTALVSAVALATLLSG. Cysteine 23 carries N-palmitoyl cysteine lipidation. Residue cysteine 23 is the site of S-diacylglycerol cysteine attachment. Residues 115–155 adopt a coiled-coil conformation; sequence LAERYKQLIDEQAVSKQEYDDANAKRLQAEASLKSAQIDLR. Residues 362–384 are disordered; that stretch reads ATNVKKPAGPDQANAAKADAKAE. Residues 368 to 378 are compositionally biased toward low complexity; that stretch reads PAGPDQANAAK.

It belongs to the membrane fusion protein (MFP) (TC 8.A.1) family.

Its subcellular location is the cell inner membrane. The periplasmic linker protein component of a constitutive organic solvent efflux system. Involved in export of toluene, styrene, m-xylene, propylbenzene and ethylbenzene. Also exports AMP and the antibiotics carbenicillin, nalidixic acid, chloramphenicol and tetracycline. The polypeptide is Toluene efflux pump periplasmic linker protein TtgA (ttgA) (Pseudomonas putida (strain DOT-T1E)).